The primary structure comprises 313 residues: Porphobilinogen deaminase (313 aa).

Residue C242 is modified to S-(dipyrrolylmethanemethyl)cysteine.

It belongs to the HMBS family. Monomer. Requires dipyrromethane as cofactor.

It carries out the reaction 4 porphobilinogen + H2O = hydroxymethylbilane + 4 NH4(+). It participates in porphyrin-containing compound metabolism; protoporphyrin-IX biosynthesis; coproporphyrinogen-III from 5-aminolevulinate: step 2/4. Functionally, tetrapolymerization of the monopyrrole PBG into the hydroxymethylbilane pre-uroporphyrinogen in several discrete steps. This Escherichia coli O7:K1 (strain IAI39 / ExPEC) protein is Porphobilinogen deaminase.